The following is a 100-amino-acid chain: Urease subunit gamma (100 aa).

It belongs to the urease gamma subunit family. In terms of assembly, heterotrimer of UreA (gamma), UreB (beta) and UreC (alpha) subunits. Three heterotrimers associate to form the active enzyme.

The protein resides in the cytoplasm. The enzyme catalyses urea + 2 H2O + H(+) = hydrogencarbonate + 2 NH4(+). Its pathway is nitrogen metabolism; urea degradation; CO(2) and NH(3) from urea (urease route): step 1/1. The polypeptide is Urease subunit gamma (Granulibacter bethesdensis (strain ATCC BAA-1260 / CGDNIH1)).